The primary structure comprises 530 residues: UDP-N-acetylmuramoyl-L-alanyl-D-glutamate--2,6-diaminopimelate ligase (530 aa).

L52 provides a ligand contact to UDP-N-acetyl-alpha-D-muramoyl-L-alanyl-D-glutamate. 139 to 145 (GTSGKTT) serves as a coordination point for ATP. UDP-N-acetyl-alpha-D-muramoyl-L-alanyl-D-glutamate-binding positions include 181-182 (TT), S208, and R216. K248 carries the post-translational modification N6-carboxylysine. Meso-2,6-diaminopimelate-binding positions include R410, 434-437 (DNPR), G488, and E492. A Meso-diaminopimelate recognition motif motif is present at residues 434–437 (DNPR).

The protein belongs to the MurCDEF family. MurE subfamily. It depends on Mg(2+) as a cofactor. Post-translationally, carboxylation is probably crucial for Mg(2+) binding and, consequently, for the gamma-phosphate positioning of ATP.

The protein localises to the cytoplasm. It carries out the reaction UDP-N-acetyl-alpha-D-muramoyl-L-alanyl-D-glutamate + meso-2,6-diaminopimelate + ATP = UDP-N-acetyl-alpha-D-muramoyl-L-alanyl-gamma-D-glutamyl-meso-2,6-diaminopimelate + ADP + phosphate + H(+). It functions in the pathway cell wall biogenesis; peptidoglycan biosynthesis. Functionally, catalyzes the addition of meso-diaminopimelic acid to the nucleotide precursor UDP-N-acetylmuramoyl-L-alanyl-D-glutamate (UMAG) in the biosynthesis of bacterial cell-wall peptidoglycan. This Mycobacterium leprae (strain TN) protein is UDP-N-acetylmuramoyl-L-alanyl-D-glutamate--2,6-diaminopimelate ligase.